The sequence spans 198 residues: Recombination protein RecR (198 aa).

Residues 57-72 (CSICGNLTDDDPCHIC) form a C4-type zinc finger. In terms of domain architecture, Toprim spans 80–175 (ETILVVEASK…KVTRLARGLA (96 aa)).

This sequence belongs to the RecR family.

In terms of biological role, may play a role in DNA repair. It seems to be involved in an RecBC-independent recombinational process of DNA repair. It may act with RecF and RecO. The polypeptide is Recombination protein RecR (Streptococcus equi subsp. zooepidemicus (strain MGCS10565)).